Consider the following 257-residue polypeptide: TLC domain-containing protein 3A (257 aa).

7 consecutive transmembrane segments (helical) span residues Met1 to Trp21, Leu42 to Cys62, Val77 to Cys97, Phe113 to Ala135, Leu142 to Leu162, Gly181 to Trp201, and Phe220 to Leu240. The TLC domain maps to Thr33 to Asp249.

As to quaternary structure, interacts with GGT7 isoform 3 and SLC3A2. In terms of tissue distribution, highly expressed in pancreas. Detected at intermediate levels in heart, placenta and kidney, and at low levels in brain, liver and skeletal muscle. Not detected in normal lung.

It is found in the cell membrane. The sequence is that of TLC domain-containing protein 3A from Homo sapiens (Human).